The chain runs to 203 residues: Endothelin-1 (203 aa).

A signal peptide spans 1–25 (MDYFPMIIALLFVAFQGAPETAVLG). The propeptide occupies 26–50 (AELSPEAESQGETPSPHASWRPRRS). Residues 27 to 48 (ELSPEAESQGETPSPHASWRPR) are disordered. Cystine bridges form between C53-C67 and C55-C63. A propeptide spanning residues 83 to 203 (YGLGSPSRSR…DKKVTHNRTH (121 aa)) is cleaved from the precursor. Residues 110–124 (CQCASQKDKKCWSFC) are endothelin-like. N200 is a glycosylation site (N-linked (GlcNAc...) asparagine).

This sequence belongs to the endothelin/sarafotoxin family.

The protein localises to the secreted. In terms of biological role, endothelins are endothelium-derived vasoconstrictor peptides. Probable ligand for G-protein coupled receptors EDNRA and EDNRB which activates PTK2B, BCAR1, BCAR3 and, GTPases RAP1 and RHOA cascade in glomerular mesangial cells. Also binds the DEAR/FBXW7-AS1 receptor. Promotes mesenteric arterial wall remodeling via activation of ROCK signaling and subsequent colocalization of NFATC3 with F-actin filaments. NFATC3 then translocates to the nucleus where it subsequently promotes the transcription of the smooth muscle hypertrophy and differentiation marker ACTA2. The protein is Endothelin-1 (EDN1) of Sus scrofa (Pig).